A 192-amino-acid chain; its full sequence is 7-methyl-GTP pyrophosphatase (192 aa).

The Proton acceptor role is filled by Asp69.

It belongs to the Maf family. YceF subfamily. Requires a divalent metal cation as cofactor.

It is found in the cytoplasm. It carries out the reaction N(7)-methyl-GTP + H2O = N(7)-methyl-GMP + diphosphate + H(+). Its function is as follows. Nucleoside triphosphate pyrophosphatase that hydrolyzes 7-methyl-GTP (m(7)GTP). May have a dual role in cell division arrest and in preventing the incorporation of modified nucleotides into cellular nucleic acids. The sequence is that of 7-methyl-GTP pyrophosphatase from Pseudomonas fluorescens (strain Pf0-1).